Consider the following 177-residue polypeptide: Large ribosomal subunit protein uL6 (177 aa).

Belongs to the universal ribosomal protein uL6 family. Part of the 50S ribosomal subunit.

In terms of biological role, this protein binds to the 23S rRNA, and is important in its secondary structure. It is located near the subunit interface in the base of the L7/L12 stalk, and near the tRNA binding site of the peptidyltransferase center. This chain is Large ribosomal subunit protein uL6, found in Erwinia tasmaniensis (strain DSM 17950 / CFBP 7177 / CIP 109463 / NCPPB 4357 / Et1/99).